The sequence spans 434 residues: 3-phosphoshikimate 1-carboxyvinyltransferase (434 aa).

Positions 22, 23, and 27 each coordinate 3-phosphoshikimate. Lys-22 is a phosphoenolpyruvate binding site. 2 residues coordinate phosphoenolpyruvate: Gly-93 and Arg-121. 3-phosphoshikimate contacts are provided by Ser-168, Ser-169, Gln-170, Ser-199, Asp-320, and Lys-347. Position 170 (Gln-170) interacts with phosphoenolpyruvate. The active-site Proton acceptor is Asp-320. Arg-351, Arg-394, and Lys-419 together coordinate phosphoenolpyruvate.

This sequence belongs to the EPSP synthase family. As to quaternary structure, monomer.

The protein resides in the cytoplasm. The enzyme catalyses 3-phosphoshikimate + phosphoenolpyruvate = 5-O-(1-carboxyvinyl)-3-phosphoshikimate + phosphate. The protein operates within metabolic intermediate biosynthesis; chorismate biosynthesis; chorismate from D-erythrose 4-phosphate and phosphoenolpyruvate: step 6/7. Functionally, catalyzes the transfer of the enolpyruvyl moiety of phosphoenolpyruvate (PEP) to the 5-hydroxyl of shikimate-3-phosphate (S3P) to produce enolpyruvyl shikimate-3-phosphate and inorganic phosphate. The polypeptide is 3-phosphoshikimate 1-carboxyvinyltransferase (Burkholderia cenocepacia (strain ATCC BAA-245 / DSM 16553 / LMG 16656 / NCTC 13227 / J2315 / CF5610) (Burkholderia cepacia (strain J2315))).